An 873-amino-acid chain; its full sequence is Alanine--tRNA ligase (873 aa).

Residues His-562, His-566, Cys-663, and His-667 each coordinate Zn(2+).

It belongs to the class-II aminoacyl-tRNA synthetase family. Zn(2+) serves as cofactor.

Its subcellular location is the cytoplasm. The catalysed reaction is tRNA(Ala) + L-alanine + ATP = L-alanyl-tRNA(Ala) + AMP + diphosphate. Its function is as follows. Catalyzes the attachment of alanine to tRNA(Ala) in a two-step reaction: alanine is first activated by ATP to form Ala-AMP and then transferred to the acceptor end of tRNA(Ala). Also edits incorrectly charged Ser-tRNA(Ala) and Gly-tRNA(Ala) via its editing domain. This is Alanine--tRNA ligase from Bordetella avium (strain 197N).